Reading from the N-terminus, the 350-residue chain is S-adenosylmethionine:tRNA ribosyltransferase-isomerase (350 aa).

The protein belongs to the QueA family. As to quaternary structure, monomer.

The protein resides in the cytoplasm. It carries out the reaction 7-aminomethyl-7-carbaguanosine(34) in tRNA + S-adenosyl-L-methionine = epoxyqueuosine(34) in tRNA + adenine + L-methionine + 2 H(+). It functions in the pathway tRNA modification; tRNA-queuosine biosynthesis. Transfers and isomerizes the ribose moiety from AdoMet to the 7-aminomethyl group of 7-deazaguanine (preQ1-tRNA) to give epoxyqueuosine (oQ-tRNA). The sequence is that of S-adenosylmethionine:tRNA ribosyltransferase-isomerase from Bacillus cytotoxicus (strain DSM 22905 / CIP 110041 / 391-98 / NVH 391-98).